We begin with the raw amino-acid sequence, 301 residues long: Acetylglutamate kinase (301 aa).

Substrate-binding positions include 68 to 69 (GG), Arg90, and Asn195.

This sequence belongs to the acetylglutamate kinase family. ArgB subfamily.

It is found in the cytoplasm. The enzyme catalyses N-acetyl-L-glutamate + ATP = N-acetyl-L-glutamyl 5-phosphate + ADP. It functions in the pathway amino-acid biosynthesis; L-arginine biosynthesis; N(2)-acetyl-L-ornithine from L-glutamate: step 2/4. Functionally, catalyzes the ATP-dependent phosphorylation of N-acetyl-L-glutamate. The polypeptide is Acetylglutamate kinase (Pseudomonas paraeruginosa (strain DSM 24068 / PA7) (Pseudomonas aeruginosa (strain PA7))).